The primary structure comprises 85 residues: uncharacterized protein (85 aa).

This is an uncharacterized protein from Acidianus filamentous virus 2 (isolate Italy/Pozzuoli) (AFV-2).